The following is a 366-amino-acid chain: Chorismate synthase (366 aa).

The NADP(+) site is built by R48 and R54. FMN contacts are provided by residues 125 to 127, 238 to 239, G278, 293 to 297, and R319; these read RSS, NA, and KPTSS.

The protein belongs to the chorismate synthase family. Homotetramer. The cofactor is FMNH2.

The catalysed reaction is 5-O-(1-carboxyvinyl)-3-phosphoshikimate = chorismate + phosphate. The protein operates within metabolic intermediate biosynthesis; chorismate biosynthesis; chorismate from D-erythrose 4-phosphate and phosphoenolpyruvate: step 7/7. Its function is as follows. Catalyzes the anti-1,4-elimination of the C-3 phosphate and the C-6 proR hydrogen from 5-enolpyruvylshikimate-3-phosphate (EPSP) to yield chorismate, which is the branch point compound that serves as the starting substrate for the three terminal pathways of aromatic amino acid biosynthesis. This reaction introduces a second double bond into the aromatic ring system. This Neisseria gonorrhoeae (strain NCCP11945) protein is Chorismate synthase.